The primary structure comprises 237 residues: Cytochrome c oxidase subunit 2 (237 aa).

Over 1 to 30 (MNLVAPTPWGLFFQDSATPQMEGIEELHNN) the chain is Mitochondrial intermembrane. The chain crosses the membrane as a helical span at residues 31 to 51 (IMFYLTIILFSVTWMMITIIK). Residues 52-67 (SFVNTKSPISHKYMNH) are Mitochondrial matrix-facing. A helical transmembrane segment spans residues 68-94 (GTLIELIWTITPAVILILIAFPSFKLL). The Mitochondrial intermembrane segment spans residues 95 to 237 (YLMDEVMDPS…SVSLKNFYYD (143 aa)). Cu cation contacts are provided by His176, Cys211, Glu213, Cys215, His219, and Met222. Glu213 contributes to the Mg(2+) binding site.

Belongs to the cytochrome c oxidase subunit 2 family. As to quaternary structure, component of the cytochrome c oxidase (complex IV, CIV), a multisubunit enzyme composed of a catalytic core of 3 subunits and several supernumerary subunits. The complex exists as a monomer or a dimer and forms supercomplexes (SCs) in the inner mitochondrial membrane with ubiquinol-cytochrome c oxidoreductase (cytochrome b-c1 complex, complex III, CIII). Cu cation serves as cofactor.

It localises to the mitochondrion inner membrane. The catalysed reaction is 4 Fe(II)-[cytochrome c] + O2 + 8 H(+)(in) = 4 Fe(III)-[cytochrome c] + 2 H2O + 4 H(+)(out). Component of the cytochrome c oxidase, the last enzyme in the mitochondrial electron transport chain which drives oxidative phosphorylation. The respiratory chain contains 3 multisubunit complexes succinate dehydrogenase (complex II, CII), ubiquinol-cytochrome c oxidoreductase (cytochrome b-c1 complex, complex III, CIII) and cytochrome c oxidase (complex IV, CIV), that cooperate to transfer electrons derived from NADH and succinate to molecular oxygen, creating an electrochemical gradient over the inner membrane that drives transmembrane transport and the ATP synthase. Cytochrome c oxidase is the component of the respiratory chain that catalyzes the reduction of oxygen to water. Electrons originating from reduced cytochrome c in the intermembrane space (IMS) are transferred via the dinuclear copper A center (CU(A)) of subunit 2 and heme A of subunit 1 to the active site in subunit 1, a binuclear center (BNC) formed by heme A3 and copper B (CU(B)). The BNC reduces molecular oxygen to 2 water molecules using 4 electrons from cytochrome c in the IMS and 4 protons from the mitochondrial matrix. The sequence is that of Cytochrome c oxidase subunit 2 (COX2) from Trichophyton rubrum (Athlete's foot fungus).